The chain runs to 190 residues: Probable DNA replication complex GINS protein PSF2 (190 aa).

This sequence belongs to the GINS2/PSF2 family. As to quaternary structure, component of the GINS complex which is a heterotetramer of gins1, gins2, gins3 and gins4.

Its subcellular location is the nucleus. The GINS complex plays an essential role in the initiation of DNA replication. The protein is Probable DNA replication complex GINS protein PSF2 of Brugia malayi (Filarial nematode worm).